A 195-amino-acid polypeptide reads, in one-letter code: Interferon tau-2 (195 aa).

Positions 1–23 (MAFVLSLLMALVLVSYGPGGSLG) are cleaved as a signal peptide. Cystine bridges form between Cys24/Cys122 and Cys52/Cys162.

This sequence belongs to the alpha/beta interferon family. IFN-alphaII subfamily. Constitutively and exclusively expressed in the mononuclear cells of the extraembryonic trophectoderm.

It is found in the secreted. Functionally, paracrine hormone primarily responsible for maternal recognition of pregnancy. Interacts with endometrial receptors, probably type I interferon receptors, and blocks estrogen receptor expression, preventing the estrogen-induced increase in oxytocin receptor expression in the endometrium. This results in the suppression of the pulsatile endometrial release of the luteolytic hormone prostaglandin F2-alpha, hindering the regression of the corpus luteum (luteolysis) and therefore a return to ovarian cyclicity. This, and a possible direct effect of IFN-tau on prostaglandin synthesis, leads in turn to continued ovarian progesterone secretion, which stimulates the secretion by the endometrium of the nutrients required for the growth of the conceptus. In summary, displays particularly high antiviral and antiproliferative potency concurrently with particular weak cytotoxicity, high antiluteolytic activity and immunomodulatory properties. In contrast with other IFNs, IFN-tau is not virally inducible. The protein is Interferon tau-2 (IFNT2) of Ovis aries (Sheep).